Here is a 970-residue protein sequence, read N- to C-terminus: Transposase for insertion sequence element IS1071 in transposon Tn5271 (970 aa).

It belongs to the transposase 7 family.

Its function is as follows. Required for transposition of transposon Tn5271. The protein is Transposase for insertion sequence element IS1071 in transposon Tn5271 of Comamonas testosteroni (Pseudomonas testosteroni).